Here is a 55-residue protein sequence, read N- to C-terminus: Large ribosomal subunit protein bL33 (55 aa).

It belongs to the bacterial ribosomal protein bL33 family.

The chain is Large ribosomal subunit protein bL33 from Paraburkholderia phytofirmans (strain DSM 17436 / LMG 22146 / PsJN) (Burkholderia phytofirmans).